Reading from the N-terminus, the 856-residue chain is Serine/threonine-protein kinase unc-51 (856 aa).

The Protein kinase domain maps to 9–275; the sequence is YSKRDLLGHG…FEDFFNHPFL (267 aa). Residues 15–23 and lysine 39 each bind ATP; that span reads LGHGAFAIV. The active-site Proton acceptor is aspartate 134. The segment at 304 to 327 is disordered; that stretch reads PQSSLPVPKRAGSTKLDSPTPVRR. An LIR motif is present at residues 358–361; the sequence is FTFL. Disordered stretches follow at residues 362 to 391, 405 to 471, and 520 to 582; these read PPRQ…PVPV, LAAA…ERMT, and PTTT…PTEP. Residues 365–385 show a composition bias toward polar residues; that stretch reads QESSPVKQVQVHTNVSPSLTT. Low complexity predominate over residues 411–436; the sequence is TAVPSSSSPTGSAVSAQHQHQHQQQQ. 2 stretches are compositionally biased toward polar residues: residues 527-536 and 566-578; these read IPKSATTANI and KYQQ…SPTA. The interval 750–856 is required for interaction with unc-14 and vab-8; sequence YHQCLVRSQE…RQGFVAAVNT (107 aa).

Belongs to the protein kinase superfamily. Ser/Thr protein kinase family. APG1/unc-51/ULK1 subfamily. As to quaternary structure, interacts with unc-14 and vab-8. Interacts (via C-terminus) with atg-13. Interacts (via the LIR motif) with lgg-1; the interaction is direct. It depends on Mg(2+) as a cofactor.

The enzyme catalyses L-seryl-[protein] + ATP = O-phospho-L-seryl-[protein] + ADP + H(+). The catalysed reaction is L-threonyl-[protein] + ATP = O-phospho-L-threonyl-[protein] + ADP + H(+). Its function is as follows. Protein kinase important for axonal elongation and axonal guidance. Functions in the CAN axons to direct both anterior and posterior migrations. Phosphorylates both unc-14 and vab-8. Component of the unc-51/atg-13 complex that is probably recruited by lgg-1 to preautophagosomes and is required for autophagosome formation. Interaction with autophagy related proteins such as atg-13 links it to the autophagy machinery to in turn promote P-granule degradation in somatic cells. Plays a role in mitophagy during limited food availability. Regulates cell size. Plays a role in male tail ray pattern formation. May be required for normal dauer morphogenesis. The chain is Serine/threonine-protein kinase unc-51 from Caenorhabditis elegans.